Here is a 268-residue protein sequence, read N- to C-terminus: Putative hydro-lyase PSPTO_5379 (268 aa).

This sequence belongs to the D-glutamate cyclase family.

This is Putative hydro-lyase PSPTO_5379 from Pseudomonas syringae pv. tomato (strain ATCC BAA-871 / DC3000).